The primary structure comprises 487 residues: ESCRT-I complex subunit vps23 (487 aa).

One can recognise an SB domain in the interval 428–487; sequence SERELKYYELKRKDEKLDEGIRALNQALHHESIMPASWLKGIKLLARQQFLIRDEMLQYS.

Component of the ESCRT-I complex (endosomal sorting complex required for transport I).

The protein resides in the cytoplasm. Its subcellular location is the endosome. It localises to the late endosome membrane. Functionally, component of the ESCRT-I complex, a regulator of vesicular trafficking process. Binds to ubiquitinated cargo proteins and is required for the sorting of endocytic ubiquitinated cargos into multivesicular bodies (MVBs). Mediates the association to the ESCRT-0 complex. In Schizosaccharomyces pombe (strain 972 / ATCC 24843) (Fission yeast), this protein is ESCRT-I complex subunit vps23 (sst6).